A 706-amino-acid chain; its full sequence is Polyribonucleotide nucleotidyltransferase (706 aa).

Positions 486 and 492 each coordinate Mg(2+). One can recognise a KH domain in the interval 553–612 (PRIYTMKINPEKIKDVIGKGGSVIRALTDETGTTIEIEDDGTIKIAATDGDKAKHAIRRI). In terms of domain architecture, S1 motif spans 622–690 (NRIYAGKVTR…RQGRIRLSMK (69 aa)).

This sequence belongs to the polyribonucleotide nucleotidyltransferase family. Component of the RNA degradosome, which is a multiprotein complex involved in RNA processing and mRNA degradation. Mg(2+) serves as cofactor.

It localises to the cytoplasm. It carries out the reaction RNA(n+1) + phosphate = RNA(n) + a ribonucleoside 5'-diphosphate. Its function is as follows. Involved in mRNA degradation. Catalyzes the phosphorolysis of single-stranded polyribonucleotides processively in the 3'- to 5'-direction. This chain is Polyribonucleotide nucleotidyltransferase, found in Yersinia enterocolitica serotype O:8 / biotype 1B (strain NCTC 13174 / 8081).